The following is a 130-amino-acid chain: uncharacterized protein (130 aa).

This is an uncharacterized protein from Pasteurella multocida (strain Pm70).